Here is a 254-residue protein sequence, read N- to C-terminus: uncharacterized protein (254 aa).

The protein belongs to the methyltransferase superfamily.

This is an uncharacterized protein from Mycobacterium bovis (strain ATCC BAA-935 / AF2122/97).